We begin with the raw amino-acid sequence, 88 residues long: Small ribosomal subunit protein uS15 (88 aa).

This sequence belongs to the universal ribosomal protein uS15 family. In terms of assembly, part of the 30S ribosomal subunit. Forms a bridge to the 50S subunit in the 70S ribosome, contacting the 23S rRNA.

Functionally, one of the primary rRNA binding proteins, it binds directly to 16S rRNA where it helps nucleate assembly of the platform of the 30S subunit by binding and bridging several RNA helices of the 16S rRNA. Forms an intersubunit bridge (bridge B4) with the 23S rRNA of the 50S subunit in the ribosome. This is Small ribosomal subunit protein uS15 from Borrelia turicatae (strain 91E135).